The primary structure comprises 294 residues: tRNA dimethylallyltransferase (294 aa).

10–17 (GPTAVGKT) provides a ligand contact to ATP. 12 to 17 (TAVGKT) is a binding site for substrate. Positions 35–38 (DSQQ) are interaction with substrate tRNA.

The protein belongs to the IPP transferase family. As to quaternary structure, monomer. Mg(2+) serves as cofactor.

The catalysed reaction is adenosine(37) in tRNA + dimethylallyl diphosphate = N(6)-dimethylallyladenosine(37) in tRNA + diphosphate. Functionally, catalyzes the transfer of a dimethylallyl group onto the adenine at position 37 in tRNAs that read codons beginning with uridine, leading to the formation of N6-(dimethylallyl)adenosine (i(6)A). The sequence is that of tRNA dimethylallyltransferase from Streptococcus pneumoniae serotype 19F (strain G54).